We begin with the raw amino-acid sequence, 504 residues long: Glucan endo-1,3-beta-glucosidase 7 (504 aa).

Residues methionine 1–alanine 22 form the signal peptide. The active-site Proton donor is glutamate 119. Catalysis depends on glutamate 264, which acts as the Nucleophile. Residues cysteine 365 and cysteine 427 are joined by a disulfide bond.

This sequence belongs to the glycosyl hydrolase 17 family. Post-translationally, contains two additional disulfide bonds.

The protein resides in the secreted. The protein localises to the cell wall. The catalysed reaction is Hydrolysis of (1-&gt;3)-beta-D-glucosidic linkages in (1-&gt;3)-beta-D-glucans.. This is Glucan endo-1,3-beta-glucosidase 7 from Arabidopsis thaliana (Mouse-ear cress).